Reading from the N-terminus, the 172-residue chain is Adenine phosphoribosyltransferase (172 aa).

Belongs to the purine/pyrimidine phosphoribosyltransferase family. In terms of assembly, homodimer.

Its subcellular location is the cytoplasm. It carries out the reaction AMP + diphosphate = 5-phospho-alpha-D-ribose 1-diphosphate + adenine. The protein operates within purine metabolism; AMP biosynthesis via salvage pathway; AMP from adenine: step 1/1. Functionally, catalyzes a salvage reaction resulting in the formation of AMP, that is energically less costly than de novo synthesis. This is Adenine phosphoribosyltransferase from Roseiflexus sp. (strain RS-1).